The following is a 443-amino-acid chain: ATP synthase subunit b-delta (443 aa).

The ATP synthase subunit b stretch occupies residues 1-168; that stretch reads MSTFIGQLIG…PSDAALDDAV (168 aa). Residues 4–24 traverse the membrane as a helical segment; it reads FIGQLIGFAVIVFLLVRFVVP. The segment at 169–443 is ATP synthase subunit delta; that stretch reads GSRMRSTSRE…LASAETQLPD (275 aa).

This sequence in the N-terminal section; belongs to the ATPase B chain family. In the C-terminal section; belongs to the ATPase delta chain family. In terms of assembly, F-type ATPases have 2 components, F(1) - the catalytic core - and F(0) - the membrane proton channel. F(1) has five subunits: alpha(3), beta(3), gamma(1), delta(1), epsilon(1). F(0) has three main subunits: a(1), b(2) and c(10-14). The alpha and beta chains form an alternating ring which encloses part of the gamma chain. F(1) is attached to F(0) by a central stalk formed by the gamma and epsilon chains, while a peripheral stalk is formed by the delta and b chains.

Its subcellular location is the cell membrane. Functionally, f(1)F(0) ATP synthase produces ATP from ADP in the presence of a proton or sodium gradient. F-type ATPases consist of two structural domains, F(1) containing the extramembraneous catalytic core and F(0) containing the membrane proton channel, linked together by a central stalk and a peripheral stalk. During catalysis, ATP synthesis in the catalytic domain of F(1) is coupled via a rotary mechanism of the central stalk subunits to proton translocation. This fusion protein includes a component of the F(0) channel (subunit b) and of the F(1) subunit (subunit delta). Two copies of subunit b and one of delta together form the peripheral 'stator' stalk which links F(1) to F(0). This is ATP synthase subunit b-delta (atpFH) from Mycobacterium sp. (strain JLS).